Reading from the N-terminus, the 92-residue chain is Small ribosomal subunit protein uS19c (92 aa).

This sequence belongs to the universal ribosomal protein uS19 family.

It is found in the plastid. It localises to the cyanelle. Functionally, protein S19 forms a complex with S13 that binds strongly to the 16S ribosomal RNA. The polypeptide is Small ribosomal subunit protein uS19c (rps19) (Cyanophora paradoxa).